The following is a 394-amino-acid chain: 3-ketosteroid-9-alpha-monooxygenase, oxygenase component (394 aa).

The 103-residue stretch at 27 to 129 (WHCLGLAKDF…TLDQDGLLFV (103 aa)) folds into the Rieske domain. Positions 68, 70, 87, and 90 each coordinate [2Fe-2S] cluster. 3 residues coordinate Fe cation: Asn-175, His-181, and His-186. Position 245 (Tyr-245) interacts with substrate. Asp-305 contributes to the Fe cation binding site.

As to quaternary structure, homotrimer. The two-component system 3-ketosteroid-9-alpha-monooxygenase is composed of an oxygenase component KshA and a reductase component KshB. [2Fe-2S] cluster is required as a cofactor. The cofactor is Fe cation.

It carries out the reaction androsta-1,4-diene-3,17-dione + 2 reduced [2Fe-2S]-[ferredoxin] + O2 + 2 H(+) = 9alpha-hydroxyandrosta-1,4-diene-3,17-dione + 2 oxidized [2Fe-2S]-[ferredoxin] + H2O. Functionally, may be involved in the degradation of cholic acid, a steroid acid found predominantly in the bile. In vitro, catalyzes the introduction of a 9alpha-hydroxyl moiety into the ring B of 3-ketosteroid substrates such as 1,4-androstadiene-3,17-dione (ADD), 4-androstene-3,17-dione (AD), 4-androstene-17beta-ol-3-one (testosterone), 4-pregnene-3,20-dione (progesterone), 3-oxo-23,24-bisnorcholesta-4-en-22-oate (4-BNC), 23,24-bisnorcholesta-4-ene-22-oate, 3-oxo-23,24-bisnorcholaesta-1,4-dien-22-oate (1,4-BNC), 23,24-bisnorcholesta-1,4-diene-22-oate and 3-oxo-23,24-bisnorcholesta-1,4-dien-22-oyl-coenzyme A thioester (1,4-BNC-CoA). KshA1 has the highest specificity for steroids possessing an isopropionyl side chain at C17. The protein is 3-ketosteroid-9-alpha-monooxygenase, oxygenase component of Rhodococcus rhodochrous.